Here is a 257-residue protein sequence, read N- to C-terminus: Phosphatidylglycerol--prolipoprotein diacylglyceryl transferase (257 aa).

The next 7 helical transmembrane spans lie at 13–33 (FGPIAVHWYGIFMAISIAVGG), 49–69 (FLLNLLMIVVIFGVIGARLMF), 88–108 (IYEGGLSWHGAVLGGFLAGLY), 123–143 (FAVVGLALGNMLVRVGNIFNH), 152–172 (FFFGRWPAQLVGVAIGAFLLI), 186–202 (YQFWSFIFYYQLLRGVF), and 223–243 (IGLFTMTQVATPFILILAYWM). R136 provides a ligand contact to a 1,2-diacyl-sn-glycero-3-phospho-(1'-sn-glycerol).

The protein belongs to the Lgt family.

It localises to the cell membrane. It catalyses the reaction L-cysteinyl-[prolipoprotein] + a 1,2-diacyl-sn-glycero-3-phospho-(1'-sn-glycerol) = an S-1,2-diacyl-sn-glyceryl-L-cysteinyl-[prolipoprotein] + sn-glycerol 1-phosphate + H(+). The protein operates within protein modification; lipoprotein biosynthesis (diacylglyceryl transfer). Catalyzes the transfer of the diacylglyceryl group from phosphatidylglycerol to the sulfhydryl group of the N-terminal cysteine of a prolipoprotein, the first step in the formation of mature lipoproteins. This is Phosphatidylglycerol--prolipoprotein diacylglyceryl transferase from Caldanaerobacter subterraneus subsp. tengcongensis (strain DSM 15242 / JCM 11007 / NBRC 100824 / MB4) (Thermoanaerobacter tengcongensis).